We begin with the raw amino-acid sequence, 234 residues long: Synaptogyrin-1 (234 aa).

At Met-1 the chain carries N-acetylmethionine. Over 1–23 (MEGGAYGAGKAGGAFDPYTLVRQ) the chain is Cytoplasmic. Residues 20-173 (LVRQPHTILR…QAVLAFQRYQ (154 aa)) enclose the MARVEL domain. Residues 24–44 (PHTILRVVSWVFSIVVFGSIV) traverse the membrane as a helical segment. At 45 to 71 (NEGYLNNPEEEEEFCIYNRNPNACSYG) the chain is on the lumenal side. A helical membrane pass occupies residues 72–92 (VTVGVLAFLTCLLYLALDVYF). Over 93 to 103 (PQISSVKDRKK) the chain is Cytoplasmic. Residues 104–124 (AVLSDIGVSAFWAFFWFVGFC) traverse the membrane as a helical segment. The Lumenal segment spans residues 125–148 (FLANQWQVSKPKDNPLNEGTDAAR). The helical transmembrane segment at 149 to 169 (AAIAFSFFSIFTWAGQAVLAF) threads the bilayer. Residues 170–234 (QRYQIGADSA…EPQGYQSQGY (65 aa)) lie on the Cytoplasmic side of the membrane. The tract at residues 201–234 (EPSAGSDPAGMGGTYQHPANAFDAEPQGYQSQGY) is disordered.

Belongs to the synaptogyrin family.

Its subcellular location is the cytoplasmic vesicle. It localises to the secretory vesicle. The protein localises to the synaptic vesicle membrane. It is found in the melanosome. Its function is as follows. May play a role in regulated exocytosis. Modulates the localization of synaptophysin/SYP into synaptic-like microvesicles and may therefore play a role in synaptic-like microvesicle formation and/or maturation. Involved in the regulation of short-term and long-term synaptic plasticity. The polypeptide is Synaptogyrin-1 (Mus musculus (Mouse)).